Here is a 321-residue protein sequence, read N- to C-terminus: Phospho-N-acetylmuramoyl-pentapeptide-transferase (321 aa).

10 helical membrane-spanning segments follow: residues methionine 1–isoleucine 21, methionine 50–valine 70, isoleucine 76–isoleucine 96, phenylalanine 112–valine 132, isoleucine 140–tryptophan 160, glycine 176–leucine 196, alanine 200–leucine 220, valine 225–methionine 245, leucine 250–valine 270, and valine 300–valine 320.

It belongs to the glycosyltransferase 4 family. MraY subfamily. Mg(2+) serves as cofactor.

It is found in the cell membrane. The catalysed reaction is UDP-N-acetyl-alpha-D-muramoyl-L-alanyl-gamma-D-glutamyl-L-lysyl-D-alanyl-D-alanine + di-trans,octa-cis-undecaprenyl phosphate = Mur2Ac(oyl-L-Ala-gamma-D-Glu-L-Lys-D-Ala-D-Ala)-di-trans,octa-cis-undecaprenyl diphosphate + UMP. It participates in cell wall biogenesis; peptidoglycan biosynthesis. Catalyzes the initial step of the lipid cycle reactions in the biosynthesis of the cell wall peptidoglycan: transfers peptidoglycan precursor phospho-MurNAc-pentapeptide from UDP-MurNAc-pentapeptide onto the lipid carrier undecaprenyl phosphate, yielding undecaprenyl-pyrophosphoryl-MurNAc-pentapeptide, known as lipid I. This chain is Phospho-N-acetylmuramoyl-pentapeptide-transferase, found in Staphylococcus epidermidis (strain ATCC 12228 / FDA PCI 1200).